Consider the following 366-residue polypeptide: Protein-glutamate methylesterase/protein-glutamine glutaminase 2 (366 aa).

The region spanning 3 to 119 (RLLIADDSAL…SLELDRLRPL (117 aa)) is the Response regulatory domain. Position 53 is a 4-aspartylphosphate (aspartate 53). The interval 149 to 168 (AASSPRAKAARRGAARQRAK) is disordered. The span at 156 to 166 (KAARRGAARQR) shows a compositional bias: basic residues. The 193-residue stretch at 171 to 363 (PAPGLVLIGT…AAVIEWGNAD (193 aa)) folds into the CheB-type methylesterase domain. Catalysis depends on residues serine 181, histidine 208, and aspartate 305.

Belongs to the CheB family. Phosphorylated by CheA. Phosphorylation of the N-terminal regulatory domain activates the methylesterase activity.

Its subcellular location is the cytoplasm. It carries out the reaction [protein]-L-glutamate 5-O-methyl ester + H2O = L-glutamyl-[protein] + methanol + H(+). It catalyses the reaction L-glutaminyl-[protein] + H2O = L-glutamyl-[protein] + NH4(+). Functionally, involved in chemotaxis. Part of a chemotaxis signal transduction system that modulates chemotaxis in response to various stimuli. Catalyzes the demethylation of specific methylglutamate residues introduced into the chemoreceptors (methyl-accepting chemotaxis proteins or MCP) by CheR. Also mediates the irreversible deamidation of specific glutamine residues to glutamic acid. This is Protein-glutamate methylesterase/protein-glutamine glutaminase 2 from Rhodopseudomonas palustris (strain BisB18).